The sequence spans 408 residues: Leucine aminopeptidase 1 (408 aa).

An N-terminal signal peptide occupies residues 1-16; sequence MKVSSAIALLLPVVAA. Positions 17–89 are excised as a propeptide; it reads RFVDSAFEQD…SAQSATTGPA (73 aa). N-linked (GlcNAc...) asparagine glycosylation is found at asparagine 95, asparagine 108, and asparagine 182. Residues histidine 190, aspartate 209, glutamate 248, and aspartate 275 each coordinate Zn(2+). Cysteine 324 and cysteine 328 are oxidised to a cystine. A Zn(2+)-binding site is contributed by histidine 357.

The protein belongs to the peptidase M28 family. M28E subfamily. Monomer. Zn(2+) is required as a cofactor.

The protein localises to the secreted. Functionally, extracellular aminopeptidase that allows assimilation of proteinaceous substrates. The protein is Leucine aminopeptidase 1 (LAP1) of Grosmannia clavigera (strain kw1407 / UAMH 11150) (Blue stain fungus).